The primary structure comprises 125 residues: Translation initiation factor 5A (125 aa).

Lysine 35 bears the Hypusine mark.

This sequence belongs to the eIF-5A family.

Its subcellular location is the cytoplasm. In terms of biological role, functions by promoting the formation of the first peptide bond. This chain is Translation initiation factor 5A (eIF5A), found in Methanoculleus marisnigri (strain ATCC 35101 / DSM 1498 / JR1).